Consider the following 335-residue polypeptide: Adenosine deaminase (335 aa).

Positions 12 and 14 each coordinate Zn(2+). H14 and D16 together coordinate substrate. H197 provides a ligand contact to Zn(2+). E200 functions as the Proton donor in the catalytic mechanism. A Zn(2+)-binding site is contributed by D278.

The protein belongs to the metallo-dependent hydrolases superfamily. Adenosine and AMP deaminases family. Adenosine deaminase subfamily. Zn(2+) is required as a cofactor.

The enzyme catalyses adenosine + H2O + H(+) = inosine + NH4(+). It carries out the reaction 2'-deoxyadenosine + H2O + H(+) = 2'-deoxyinosine + NH4(+). Catalyzes the hydrolytic deamination of adenosine and 2-deoxyadenosine. The sequence is that of Adenosine deaminase from Clostridium botulinum (strain Kyoto / Type A2).